Consider the following 174-residue polypeptide: Large ribosomal subunit protein uL6 (174 aa).

It belongs to the universal ribosomal protein uL6 family. Part of the 50S ribosomal subunit.

In terms of biological role, this protein binds to the 23S rRNA, and is important in its secondary structure. It is located near the subunit interface in the base of the L7/L12 stalk, and near the tRNA binding site of the peptidyltransferase center. The protein is Large ribosomal subunit protein uL6 of Stenotrophomonas maltophilia (strain R551-3).